Reading from the N-terminus, the 85-residue chain is Cell division topological specificity factor (85 aa).

Belongs to the MinE family.

Prevents the cell division inhibition by proteins MinC and MinD at internal division sites while permitting inhibition at polar sites. This ensures cell division at the proper site by restricting the formation of a division septum at the midpoint of the long axis of the cell. The protein is Cell division topological specificity factor of Cellvibrio japonicus (strain Ueda107) (Pseudomonas fluorescens subsp. cellulosa).